Consider the following 178-residue polypeptide: uncharacterized protein (178 aa).

This is an uncharacterized protein from Rhizobium fredii (Sinorhizobium fredii).